A 69-amino-acid chain; its full sequence is Putative membrane protein insertion efficiency factor (69 aa).

Belongs to the UPF0161 family.

The protein resides in the cell membrane. Functionally, could be involved in insertion of integral membrane proteins into the membrane. The polypeptide is Putative membrane protein insertion efficiency factor (Caldanaerobacter subterraneus subsp. tengcongensis (strain DSM 15242 / JCM 11007 / NBRC 100824 / MB4) (Thermoanaerobacter tengcongensis)).